Here is a 495-residue protein sequence, read N- to C-terminus: GTPase Der (495 aa).

2 EngA-type G domains span residues Pro-3–Glu-166 and Ile-208–Thr-381. Residues Gly-9–Ser-16, Asp-56–Ile-60, Asn-118–Asp-121, Gly-214–Ser-221, Asp-261–Val-265, and Asn-326–Asp-329 contribute to the GTP site. One can recognise a KH-like domain in the interval Lys-382–Glu-466.

The protein belongs to the TRAFAC class TrmE-Era-EngA-EngB-Septin-like GTPase superfamily. EngA (Der) GTPase family. As to quaternary structure, associates with the 50S ribosomal subunit.

Functionally, GTPase that plays an essential role in the late steps of ribosome biogenesis. This chain is GTPase Der, found in Yersinia pseudotuberculosis serotype IB (strain PB1/+).